Here is a 72-residue protein sequence, read N- to C-terminus: Large ribosomal subunit protein bL31 (72 aa).

Zn(2+) is bound by residues C16, C18, C37, and C40.

The protein belongs to the bacterial ribosomal protein bL31 family. Type A subfamily. As to quaternary structure, part of the 50S ribosomal subunit. It depends on Zn(2+) as a cofactor.

Its function is as follows. Binds the 23S rRNA. In Buchnera aphidicola subsp. Schizaphis graminum (strain Sg), this protein is Large ribosomal subunit protein bL31.